Reading from the N-terminus, the 315-residue chain is Ribosomal RNA small subunit methyltransferase H (315 aa).

Residues 36-38 (GGH), Asp-56, Phe-81, Asp-103, and Gln-110 each bind S-adenosyl-L-methionine.

The protein belongs to the methyltransferase superfamily. RsmH family.

The protein localises to the cytoplasm. The catalysed reaction is cytidine(1402) in 16S rRNA + S-adenosyl-L-methionine = N(4)-methylcytidine(1402) in 16S rRNA + S-adenosyl-L-homocysteine + H(+). In terms of biological role, specifically methylates the N4 position of cytidine in position 1402 (C1402) of 16S rRNA. The protein is Ribosomal RNA small subunit methyltransferase H of Idiomarina loihiensis (strain ATCC BAA-735 / DSM 15497 / L2-TR).